The sequence spans 103 residues: Large ribosomal subunit protein bL21 (103 aa).

It belongs to the bacterial ribosomal protein bL21 family. Part of the 50S ribosomal subunit. Contacts protein L20.

Functionally, this protein binds to 23S rRNA in the presence of protein L20. The chain is Large ribosomal subunit protein bL21 from Variovorax paradoxus (strain S110).